The chain runs to 129 residues: Glycoprotein hormone alpha-2 (129 aa).

The N-terminal stretch at 1-23 (MPMASPQTLVLYLLVLAVTEAWG) is a signal peptide. Cystine bridges form between C31–C89, C48–C103, C57–C119, and C61–C121. 2 N-linked (GlcNAc...) asparagine glycosylation sites follow: N37 and N81.

This sequence belongs to the glycoprotein hormones subunit alpha family. As to quaternary structure, heterodimer with GPHB5; this heterodimer interacts with thyroid-stimulating hormone receptor (TSHR), and hence stimulates cAMP production. In terms of processing, glycosylated. Found in a variety of tissues.

Its subcellular location is the secreted. In terms of biological role, functions as a heterodimeric glycoprotein hormone with GPHB5 able to bind and activate the thyroid-stimulating hormone receptor (TSHR), leading to increased cAMP production. Plays a central role in controlling thyroid cell metabolism. The protein is Glycoprotein hormone alpha-2 (GPHA2) of Homo sapiens (Human).